A 253-amino-acid polypeptide reads, in one-letter code: DNA polymerase sliding clamp 2 (253 aa).

This sequence belongs to the PCNA family. Homotrimer. The subunits circularize to form a toroid; DNA passes through its center. Replication factor C (RFC) is required to load the toroid on the DNA. Interacts with TIP.

With respect to regulation, inhibited by interaction with the PCNA inhibitor TIP. Its function is as follows. Sliding clamp subunit that acts as a moving platform for DNA processing. Responsible for tethering the catalytic subunit of DNA polymerase and other proteins to DNA during high-speed replication. The protein is DNA polymerase sliding clamp 2 of Thermococcus kodakarensis (strain ATCC BAA-918 / JCM 12380 / KOD1) (Pyrococcus kodakaraensis (strain KOD1)).